Consider the following 384-residue polypeptide: Acetylornithine aminotransferase (384 aa).

Pyridoxal 5'-phosphate is bound by residues 95–96 and Phe-122; that span reads GA. Arg-125 provides a ligand contact to N(2)-acetyl-L-ornithine. 207–210 serves as a coordination point for pyridoxal 5'-phosphate; sequence DEIQ. Lys-236 is subject to N6-(pyridoxal phosphate)lysine. N(2)-acetyl-L-ornithine is bound at residue Ser-264. Thr-265 serves as a coordination point for pyridoxal 5'-phosphate.

It belongs to the class-III pyridoxal-phosphate-dependent aminotransferase family. ArgD subfamily. As to quaternary structure, homodimer. Requires pyridoxal 5'-phosphate as cofactor.

The protein localises to the cytoplasm. The enzyme catalyses N(2)-acetyl-L-ornithine + 2-oxoglutarate = N-acetyl-L-glutamate 5-semialdehyde + L-glutamate. Its pathway is amino-acid biosynthesis; L-arginine biosynthesis; N(2)-acetyl-L-ornithine from L-glutamate: step 4/4. The sequence is that of Acetylornithine aminotransferase from Halalkalibacterium halodurans (strain ATCC BAA-125 / DSM 18197 / FERM 7344 / JCM 9153 / C-125) (Bacillus halodurans).